Consider the following 375-residue polypeptide: Protein NDRG3 (375 aa).

Residues 326–375 (RSRTHSASSSGSMEIPRSRSHTSNAQLKSSSNNSLSNQIQETPQTIELSC) form a disordered region. Low complexity predominate over residues 348–363 (SNAQLKSSSNNSLSNQ). Over residues 364 to 375 (IQETPQTIELSC) the composition is skewed to polar residues.

It belongs to the NDRG family.

The chain is Protein NDRG3 from Xenopus laevis (African clawed frog).